Consider the following 341-residue polypeptide: uncharacterized protein (341 aa).

Belongs to the cycloisomerase 2 family.

This is an uncharacterized protein from Lactococcus lactis subsp. lactis (strain IL1403) (Streptococcus lactis).